The following is a 99-amino-acid chain: Imizoquin biosynthesis cluster protein A (99 aa).

It participates in secondary metabolite biosynthesis. Part of the gene cluster that mediates the biosynthesis of imizoquins A to D, tripeptide-derived alkaloids that serve a protective role against oxidative stress that are essential for normal germination. ImqB is a canonical three-module NRPS that assembles the tripeptide backbone of the imizoquins via condensation of Trp, Tyr, and Leu-derived precursors. N-methylation by imqF and phenol oxidation by imqC, followed by cyclization via the FAD-dependent oxidase imqH carry out the three-step transformation of L-tyrosine into tetrahydroisoquinoline. Importantly, this sequence requires the presence of a free amine in the tyrosine moiety, indicating that isoquinoline formation occurs prior to peptide bond formation. The imidazolidin-4-one ring of imizoquins could form following additional oxidation of the methyl-derived bridgehead carbon by imqH. Lastly, O-methylation by imqG and leucine hydroxylation by imqE complete biosynthesis of the imizoquins. In Aspergillus flavus (strain ATCC 200026 / FGSC A1120 / IAM 13836 / NRRL 3357 / JCM 12722 / SRRC 167), this protein is Imizoquin biosynthesis cluster protein A.